We begin with the raw amino-acid sequence, 537 residues long: Small conductance calcium-activated potassium channel protein 1 (537 aa).

Residues 1 to 10 (MSSHSHNGSV) show a composition bias toward polar residues. The segment at 1–90 (MSSHSHNGSV…GKPPTVSHRL (90 aa)) is disordered. Residues 65-76 (QEEEEEEEEEED) show a composition bias toward acidic residues. Residues 108-128 (LIFGMFGIVVMVTETELSWGV) traverse the membrane as a helical segment. A helical transmembrane segment spans residues 137–157 (FALKCLISLSTVILLGLVILY). Residues 176 to 196 (IAMTWERVSLISLELVVCAIH) traverse the membrane as a helical segment. The helical transmembrane segment at 225–245 (VLLSIPMFLRLYLLARVMLLH) threads the bilayer. Residues 274–294 (LMTICPGTVLLVFSVSSWIVA) traverse the membrane as a helical segment. The segment at residues 314-334 (FLGAMWLISITFLSIGYGDMV) is an intramembrane region (pore-forming). The segment S6 stretch occupies residues 343–363 (VCLLTGIMGAGCTALVVAVVA). Residues 381–460 (DTQLTKRVKN…LAELAKAQSI (80 aa)) are calmodulin-binding.

The protein belongs to the potassium channel KCNN family. KCa2.1/KCNN1 subfamily. In terms of assembly, homodimer. Heteromultimer with KCNN2 and KCNN3. The complex is composed of 4 channel subunits each of which binds to a calmodulin subunit which regulates the channel activity through calcium-binding. Interacts with calmodulin. In terms of tissue distribution, highest expression in brain and liver with lower levels in heart, testis, kidney and colon. In colon, detected in smooth muscle cells. Expressed in atrial and ventricular myocytes with higher levels in atrial myocytes.

Its subcellular location is the membrane. The protein resides in the cytoplasm. It localises to the myofibril. The protein localises to the sarcomere. It is found in the z line. It catalyses the reaction K(+)(in) = K(+)(out). With respect to regulation, inhibited by bee venom neurotoxin apamin. Inhibited by d-tubocurarine and tetraethylammonium (TEA). Small conductance calcium-activated potassium channel that mediates the voltage-independent transmembrane transfer of potassium across the cell membrane through a constitutive interaction with calmodulin which binds the intracellular calcium allowing its opening. The current is characterized by a voltage-independent activation, an intracellular calcium concentration increase-dependent activation and a single-channel conductance of about 3 picosiemens. Also presents an inwardly rectifying current, thus reducing its already small outward conductance of potassium ions, which is particularly the case when the membrane potential displays positive values, above + 20 mV. Activation is followed by membrane hyperpolarization. Thought to regulate neuronal excitability by contributing to the slow component of synaptic afterhyperpolarization. The protein is Small conductance calcium-activated potassium channel protein 1 of Mus musculus (Mouse).